The following is a 329-amino-acid chain: MFYVEILGLLPEMAEAEVKALAELRNGTIKERDYLLVVGNVENVEIFERLGLAHEYGILLGSGDDVRDILDLVRGLEWKEIIKGTFAVRKEVMVNCAHEVKNLEKIIGGIIHSQGLRVNLSKPDTIIKVYCGRKLWIGIRIREFRGKEFDERKADRRPFSRPIALPPRIARAMVNLTRATREILDPFMGTGGMLIEAGLMGLKVYGIDIREDMVEGAKINLEYYGVKDYVVKVGDATKIKEAFPGKTFEAIATDPPYGTSTTLPMDRDELYKRALESMYSVLEGRLAIAFPSDFDALDVAETIGFKVIGRFYQRVHSSLSRYFYIMEAR.

Positions 40–143 (NVENVEIFER…KLWIGIRIRE (104 aa)) constitute a THUMP domain.

The protein belongs to the methyltransferase superfamily. Trm-G10 family. Monomer.

Its subcellular location is the cytoplasm. It carries out the reaction guanosine(10) in tRNA + 2 S-adenosyl-L-methionine = N(2)-dimethylguanosine(10) in tRNA + 2 S-adenosyl-L-homocysteine + 2 H(+). Functionally, catalyzes the adenosylmethionine-dependent methylation of the exocyclic amino group (N(2)) of guanosine at position 10 of various tRNAs. Acts via a two-step process that leads to the formation of either N(2)-monomethyl (m(2)G) or N(2)-dimethylguanosine (m(2)(2)G). In Pyrococcus abyssi (strain GE5 / Orsay), this protein is tRNA (guanine(10)-N2)-dimethyltransferase (trmG10).